Consider the following 311-residue polypeptide: Giardin subunit gamma (311 aa).

The stretch at 185–233 forms a coiled coil; the sequence is GLQTEINSLEAIIEREFAQAANRLNQEVSNFKESFDASERNIKLQKKHV.

Interacts with EB1.

It is found in the cytoplasm. Its subcellular location is the cytoskeleton. Giardins are involved in parasite attachment to the intestinal mucosa and in the cytoskeletal disassembly and reassembly that marks the transition from infectious trophozoite to transmissible cyst. They may interact with other cytoskeletal proteins such as microtubules in the microribbons or crossbridges, to maintain the integrity of the ventral disk. Involved in formation of the ventral disk. This chain is Giardin subunit gamma, found in Giardia intestinalis (Giardia lamblia).